A 65-amino-acid polypeptide reads, in one-letter code: Conotoxin VnMLCL-031 (65 aa).

The signal sequence occupies residues M1–P19. A propeptide spanning residues N20–X43 is cleaved from the precursor. Residue I64 is modified to Isoleucine amide.

Belongs to the conotoxin T superfamily. In terms of tissue distribution, expressed by the venom duct.

Its subcellular location is the secreted. The protein is Conotoxin VnMLCL-031 of Conus ventricosus (Mediterranean cone).